We begin with the raw amino-acid sequence, 267 residues long: Tryptophan synthase alpha chain (267 aa).

Catalysis depends on proton acceptor residues E49 and D60.

Belongs to the TrpA family. Tetramer of two alpha and two beta chains.

The enzyme catalyses (1S,2R)-1-C-(indol-3-yl)glycerol 3-phosphate + L-serine = D-glyceraldehyde 3-phosphate + L-tryptophan + H2O. The protein operates within amino-acid biosynthesis; L-tryptophan biosynthesis; L-tryptophan from chorismate: step 5/5. Functionally, the alpha subunit is responsible for the aldol cleavage of indoleglycerol phosphate to indole and glyceraldehyde 3-phosphate. The polypeptide is Tryptophan synthase alpha chain (Geobacter sp. (strain M21)).